A 518-amino-acid polypeptide reads, in one-letter code: Probable high-affinity hexose transporter ght7 (518 aa).

Topologically, residues 1 to 27 are cytoplasmic; it reads MRDFQSRFADRYNQITNSYSYSSSRQG. Residues 28–48 traverse the membrane as a helical segment; it reads LITGMVNVGSFFGCLLSSPVA. Over 49 to 54 the chain is Extracellular; the sequence is DKIGKR. The helical transmembrane segment at 55 to 75 threads the bilayer; sequence LSIIVWTTVYLIGIIIQVTTV. Over 76–77 the chain is Cytoplasmic; it reads PS. The chain crosses the membrane as a helical span at residues 78 to 98; it reads WVQILVAKIWTGLSIGALSVI. The Extracellular segment spans residues 99–112; the sequence is TPGYQSEVAPAIMR. The chain crosses the membrane as a helical span at residues 113–133; sequence GAIVTTYQLFITLGIFIAACI. The Cytoplasmic segment spans residues 134–149; the sequence is NMGTHKYSHGTTAQWR. The chain crosses the membrane as a helical span at residues 150 to 170; it reads ISIGINLLWGIITLVGIIFLP. The Extracellular portion of the chain corresponds to 171–236; that stretch reads ESPRYLIAIG…IFNANIRYRT (66 aa). A helical transmembrane segment spans residues 237–257; the sequence is FLGMAVMMFQQLTGANYYFYY. Topologically, residues 258 to 271 are cytoplasmic; it reads GTQVFRGTGMDSPY. Residues 272-292 form a helical membrane-spanning segment; it reads LAALIPDAVNCGCTFGAIFVL. Topologically, residues 293-298 are extracellular; the sequence is EFFGRR. Residues 299 to 319 traverse the membrane as a helical segment; it reads SPLIVGGIWQYICFFIYAAVG. The Cytoplasmic segment spans residues 320-333; it reads DRALYHKNGTSNHR. Residues 334 to 354 form a helical membrane-spanning segment; it reads AGAVMIVFSCLFIFSFSQTWA. At 355–374 the chain is on the extracellular side; that stretch reads PAAYVIVGESYPVRYRSKCA. Residues 375 to 395 form a helical membrane-spanning segment; the sequence is AVATSANWFWNFLISFFTPFI. The Cytoplasmic segment spans residues 396–402; that stretch reads TNSIGFK. The chain crosses the membrane as a helical span at residues 403-423; sequence YGYIFASCNLTGAAIIFLFVH. The Extracellular portion of the chain corresponds to 424-518; that stretch reads ETKGRTLEEI…IRPDKREPRL (95 aa). The span at 477-506 shows a compositional bias: polar residues; it reads IENTDNQGDSGSFQTSTPDDSRPEQNQASA. The segment at 477–518 is disordered; sequence IENTDNQGDSGSFQTSTPDDSRPEQNQASATYIRPDKREPRL.

Belongs to the major facilitator superfamily. Sugar transporter (TC 2.A.1.1) family.

It is found in the membrane. The polypeptide is Probable high-affinity hexose transporter ght7 (ght7) (Schizosaccharomyces pombe (strain 972 / ATCC 24843) (Fission yeast)).